Here is a 297-residue protein sequence, read N- to C-terminus: 33 kDa chaperonin (297 aa).

2 cysteine pairs are disulfide-bonded: Cys-232/Cys-234 and Cys-266/Cys-269.

This sequence belongs to the HSP33 family. Post-translationally, under oxidizing conditions two disulfide bonds are formed involving the reactive cysteines. Under reducing conditions zinc is bound to the reactive cysteines and the protein is inactive.

The protein resides in the cytoplasm. In terms of biological role, redox regulated molecular chaperone. Protects both thermally unfolding and oxidatively damaged proteins from irreversible aggregation. Plays an important role in the bacterial defense system toward oxidative stress. The protein is 33 kDa chaperonin of Azotobacter vinelandii (strain DJ / ATCC BAA-1303).